A 203-amino-acid chain; its full sequence is Dual-action ribosomal maturation protein DarP (203 aa).

Disordered regions lie at residues 1 to 31 (MPPM…SKSQ) and 182 to 203 (GGAS…DDEA). Residues 186–203 (DSDDEAADDAGDDHDDEA) show a composition bias toward acidic residues.

It belongs to the DarP family.

Its subcellular location is the cytoplasm. Member of a network of 50S ribosomal subunit biogenesis factors which assembles along the 30S-50S interface, preventing incorrect 23S rRNA structures from forming. Promotes peptidyl transferase center (PTC) maturation. This is Dual-action ribosomal maturation protein DarP from Burkholderia cenocepacia (strain HI2424).